Reading from the N-terminus, the 122-residue chain is Phospholipase A2 homolog ECS_00014 (122 aa).

7 cysteine pairs are disulfide-bonded: C26-C115, C28-C44, C43-C95, C49-C122, C50-C88, C57-C81, and C75-C86. Positions 105-117 are important for membrane-damaging activities in eukaryotes and bacteria; heparin-binding; that stretch reads KKYTYYPNFWCKG.

The protein belongs to the phospholipase A2 family. Group II subfamily. S49 sub-subfamily. Monomer. Expressed by the venom gland.

The protein localises to the secreted. Snake venom phospholipase A2 homolog that lacks enzymatic activity. Shows high myotoxin activities and displays edema-inducing activities. Has cytotoxic activities against HUVEC cells (LC(50)=12.2 uL) and human lung adenocarcinoma A549 cells (LC(50)=8.5 uL). This Echis carinatus sochureki (Saw-scaled viper) protein is Phospholipase A2 homolog ECS_00014.